The chain runs to 470 residues: Glutamate--tRNA ligase 1 (470 aa).

The short motif at 15–25 (PSPTGTMHIGT) is the 'HIGH' region element. Positions 241–245 (KLSKR) match the 'KMSKS' region motif. Residue K244 participates in ATP binding.

This sequence belongs to the class-I aminoacyl-tRNA synthetase family. Glutamate--tRNA ligase type 1 subfamily. As to quaternary structure, monomer.

The protein resides in the cytoplasm. The catalysed reaction is tRNA(Glu) + L-glutamate + ATP = L-glutamyl-tRNA(Glu) + AMP + diphosphate. Functionally, catalyzes the attachment of glutamate to tRNA(Glu) in a two-step reaction: glutamate is first activated by ATP to form Glu-AMP and then transferred to the acceptor end of tRNA(Glu). The sequence is that of Glutamate--tRNA ligase 1 from Jannaschia sp. (strain CCS1).